The sequence spans 97 residues: MIDQEQVHKVANLARLELTPEEEEQFTTQLGSILDYIQQLDELDVSNVPPTTRAIDVSNITREDELQPYANRESILNSAPEQEGEFFKVPKILNSNE.

Belongs to the GatC family. As to quaternary structure, heterotrimer of A, B and C subunits.

The enzyme catalyses L-glutamyl-tRNA(Gln) + L-glutamine + ATP + H2O = L-glutaminyl-tRNA(Gln) + L-glutamate + ADP + phosphate + H(+). The catalysed reaction is L-aspartyl-tRNA(Asn) + L-glutamine + ATP + H2O = L-asparaginyl-tRNA(Asn) + L-glutamate + ADP + phosphate + 2 H(+). Functionally, allows the formation of correctly charged Asn-tRNA(Asn) or Gln-tRNA(Gln) through the transamidation of misacylated Asp-tRNA(Asn) or Glu-tRNA(Gln) in organisms which lack either or both of asparaginyl-tRNA or glutaminyl-tRNA synthetases. The reaction takes place in the presence of glutamine and ATP through an activated phospho-Asp-tRNA(Asn) or phospho-Glu-tRNA(Gln). This Nostoc punctiforme (strain ATCC 29133 / PCC 73102) protein is Aspartyl/glutamyl-tRNA(Asn/Gln) amidotransferase subunit C.